A 729-amino-acid chain; its full sequence is Polyribonucleotide nucleotidyltransferase (729 aa).

The Mg(2+) site is built by Asp-485 and Asp-491. One can recognise a KH domain in the interval 552 to 611 (PRITTMKVAEDKIRTIIGKGGATIKGLIESTGVSIDIDDSGVIQLFSPDKMALEEAQKQI). The S1 motif domain occupies 621 to 689 (GQTYQGKVSK…KQGRVKLEWK (69 aa)).

This sequence belongs to the polyribonucleotide nucleotidyltransferase family. As to quaternary structure, component of the RNA degradosome, which is a multiprotein complex involved in RNA processing and mRNA degradation. Requires Mg(2+) as cofactor.

It localises to the cytoplasm. It carries out the reaction RNA(n+1) + phosphate = RNA(n) + a ribonucleoside 5'-diphosphate. Functionally, involved in mRNA degradation. Catalyzes the phosphorolysis of single-stranded polyribonucleotides processively in the 3'- to 5'-direction. The polypeptide is Polyribonucleotide nucleotidyltransferase (Legionella pneumophila (strain Corby)).